A 191-amino-acid polypeptide reads, in one-letter code: Large ribosomal subunit protein bL9 (191 aa).

The interval 150–191 (EAERQAKGESLTSADAIYGVDEDALRPEDFFDPDADRDGDDE) is disordered. The segment covering 179–191 (FFDPDADRDGDDE) has biased composition (acidic residues).

It belongs to the bacterial ribosomal protein bL9 family.

In terms of biological role, binds to the 23S rRNA. This Allorhizobium ampelinum (strain ATCC BAA-846 / DSM 112012 / S4) (Agrobacterium vitis (strain S4)) protein is Large ribosomal subunit protein bL9.